Reading from the N-terminus, the 119-residue chain is MTSTKNLAKAIVILYAICFFTNSDGRPMMKRSVSEMQLMHNLGEHRHTVERQDWLQMKLQDVHSALEDARTQRPRNKEDIVLGEIRNRRLLPEHLRAAVQKKSIDLDKAYMNVLFKTKP.

An N-terminal signal peptide occupies residues 1–25 (MTSTKNLAKAIVILYAICFFTNSDG). A propeptide spanning residues 26–31 (RPMMKR) is cleaved from the precursor.

Belongs to the parathyroid hormone family. Interacts with PTH1R (via N-terminal extracellular domain).

The protein localises to the secreted. Its function is as follows. Parathyroid hormone elevates calcium level by dissolving the salts in bone and preventing their renal excretion. Acts by binding to its receptor, PTH1R, activating G protein-coupled receptor signaling. Stimulates [1-14C]-2-deoxy-D-glucose (2DG) transport and glycogen synthesis in osteoblastic cells. This chain is Parathyroid hormone, found in Gallus gallus (Chicken).